Reading from the N-terminus, the 96-residue chain is Co-chaperonin GroES (96 aa).

This sequence belongs to the GroES chaperonin family. Heptamer of 7 subunits arranged in a ring. Interacts with the chaperonin GroEL.

It is found in the cytoplasm. Its function is as follows. Together with the chaperonin GroEL, plays an essential role in assisting protein folding. The GroEL-GroES system forms a nano-cage that allows encapsulation of the non-native substrate proteins and provides a physical environment optimized to promote and accelerate protein folding. GroES binds to the apical surface of the GroEL ring, thereby capping the opening of the GroEL channel. The sequence is that of Co-chaperonin GroES from Thioalkalivibrio sulfidiphilus (strain HL-EbGR7).